We begin with the raw amino-acid sequence, 368 residues long: Quinolinate synthase (368 aa).

The iminosuccinate site is built by histidine 46 and serine 63. Cysteine 110 contributes to the [4Fe-4S] cluster binding site. Residues 141–143 (YVN) and serine 162 each bind iminosuccinate. Cysteine 230 contributes to the [4Fe-4S] cluster binding site. Iminosuccinate-binding positions include 256-258 (HPE) and threonine 273. Residue cysteine 320 coordinates [4Fe-4S] cluster.

The protein belongs to the quinolinate synthase family. Type 3 subfamily. It depends on [4Fe-4S] cluster as a cofactor.

The protein localises to the cytoplasm. It catalyses the reaction iminosuccinate + dihydroxyacetone phosphate = quinolinate + phosphate + 2 H2O + H(+). It functions in the pathway cofactor biosynthesis; NAD(+) biosynthesis; quinolinate from iminoaspartate: step 1/1. In terms of biological role, catalyzes the condensation of iminoaspartate with dihydroxyacetone phosphate to form quinolinate. In Bacillus cytotoxicus (strain DSM 22905 / CIP 110041 / 391-98 / NVH 391-98), this protein is Quinolinate synthase.